The chain runs to 682 residues: Acyl-CoA synthetase short-chain family member 3, mitochondrial (682 aa).

A mitochondrion-targeting transit peptide spans 1–29 (MKPSWLQCRKVTGAGTLGAPLPGSPSVRG). Residue 222 to 225 (EPGR) coordinates CoA. Residues 420–422 (GER) and 441–446 (DHWWQT) contribute to the ATP site. K513 is subject to N6-succinyllysine. K519 carries the N6-acetyllysine modification. 3 residues coordinate ATP: D534, R549, and R560. R619 provides a ligand contact to CoA.

Belongs to the ATP-dependent AMP-binding enzyme family.

The protein resides in the mitochondrion matrix. The catalysed reaction is acetate + ATP + CoA = acetyl-CoA + AMP + diphosphate. It carries out the reaction propanoate + ATP + CoA = propanoyl-CoA + AMP + diphosphate. It catalyses the reaction butanoate + ATP + CoA = butanoyl-CoA + AMP + diphosphate. In terms of biological role, catalyzes the synthesis of acetyl-CoA from short-chain fatty acids. Propionate is the preferred substrate but can also utilize acetate and butyrate with a much lower affinity. In Mus musculus (Mouse), this protein is Acyl-CoA synthetase short-chain family member 3, mitochondrial (Acss3).